A 459-amino-acid polypeptide reads, in one-letter code: tRNA modification GTPase MnmE (459 aa).

(6S)-5-formyl-5,6,7,8-tetrahydrofolate is bound by residues arginine 23, glutamate 88, and arginine 127. The TrmE-type G domain occupies 223–381 (GLSVVIVGKP…IKNCIKELFF (159 aa)). Asparagine 233 is a binding site for K(+). GTP-binding positions include 233 to 238 (NVGKSS), 252 to 258 (TDIPGTT), and 277 to 280 (DTAG). Serine 237 lines the Mg(2+) pocket. 3 residues coordinate K(+): threonine 252, isoleucine 254, and threonine 257. Mg(2+) is bound at residue threonine 258. (6S)-5-formyl-5,6,7,8-tetrahydrofolate is bound at residue lysine 459.

The protein belongs to the TRAFAC class TrmE-Era-EngA-EngB-Septin-like GTPase superfamily. TrmE GTPase family. Homodimer. Heterotetramer of two MnmE and two MnmG subunits. K(+) is required as a cofactor.

It localises to the cytoplasm. In terms of biological role, exhibits a very high intrinsic GTPase hydrolysis rate. Involved in the addition of a carboxymethylaminomethyl (cmnm) group at the wobble position (U34) of certain tRNAs, forming tRNA-cmnm(5)s(2)U34. In Clostridium kluyveri (strain ATCC 8527 / DSM 555 / NBRC 12016 / NCIMB 10680 / K1), this protein is tRNA modification GTPase MnmE.